Here is a 209-residue protein sequence, read N- to C-terminus: Probable nicotinate-nucleotide adenylyltransferase (209 aa).

The protein belongs to the NadD family.

The catalysed reaction is nicotinate beta-D-ribonucleotide + ATP + H(+) = deamido-NAD(+) + diphosphate. It functions in the pathway cofactor biosynthesis; NAD(+) biosynthesis; deamido-NAD(+) from nicotinate D-ribonucleotide: step 1/1. Its function is as follows. Catalyzes the reversible adenylation of nicotinate mononucleotide (NaMN) to nicotinic acid adenine dinucleotide (NaAD). This Shewanella woodyi (strain ATCC 51908 / MS32) protein is Probable nicotinate-nucleotide adenylyltransferase.